A 463-amino-acid polypeptide reads, in one-letter code: L-seryl-tRNA(Sec) selenium transferase (463 aa).

Lys295 is modified (N6-(pyridoxal phosphate)lysine).

The protein belongs to the SelA family. In terms of assembly, homodecamer; pentamer of dimers. Binds only one seryl-tRNA(Sec) per dimer. The cofactor is pyridoxal 5'-phosphate.

It localises to the cytoplasm. The catalysed reaction is L-seryl-tRNA(Sec) + selenophosphate + H(+) = L-selenocysteinyl-tRNA(Sec) + phosphate. It participates in aminoacyl-tRNA biosynthesis; selenocysteinyl-tRNA(Sec) biosynthesis; selenocysteinyl-tRNA(Sec) from L-seryl-tRNA(Sec) (bacterial route): step 1/1. In terms of biological role, converts seryl-tRNA(Sec) to selenocysteinyl-tRNA(Sec) required for selenoprotein biosynthesis. This Serratia proteamaculans (strain 568) protein is L-seryl-tRNA(Sec) selenium transferase.